A 474-amino-acid chain; its full sequence is Phosphomannomutase (474 aa).

The active-site Phosphoserine intermediate is the Ser-101. 4 residues coordinate Mg(2+): Ser-101, Asp-242, Asp-244, and Asp-246.

Belongs to the phosphohexose mutase family. Mg(2+) serves as cofactor.

It catalyses the reaction alpha-D-mannose 1-phosphate = D-mannose 6-phosphate. This Sinorhizobium fredii (strain NBRC 101917 / NGR234) protein is Phosphomannomutase (noeK).